The sequence spans 283 residues: Ribosomal RNA small subunit methyltransferase A (283 aa).

S-adenosyl-L-methionine contacts are provided by asparagine 29, leucine 31, glycine 56, glutamate 77, aspartate 102, and asparagine 123.

It belongs to the class I-like SAM-binding methyltransferase superfamily. rRNA adenine N(6)-methyltransferase family. RsmA subfamily.

Its subcellular location is the cytoplasm. The catalysed reaction is adenosine(1518)/adenosine(1519) in 16S rRNA + 4 S-adenosyl-L-methionine = N(6)-dimethyladenosine(1518)/N(6)-dimethyladenosine(1519) in 16S rRNA + 4 S-adenosyl-L-homocysteine + 4 H(+). In terms of biological role, specifically dimethylates two adjacent adenosines (A1518 and A1519) in the loop of a conserved hairpin near the 3'-end of 16S rRNA in the 30S particle. May play a critical role in biogenesis of 30S subunits. In Acidobacterium capsulatum (strain ATCC 51196 / DSM 11244 / BCRC 80197 / JCM 7670 / NBRC 15755 / NCIMB 13165 / 161), this protein is Ribosomal RNA small subunit methyltransferase A.